Consider the following 357-residue polypeptide: DNA replication and repair protein RecF (357 aa).

30-37 (GANGSGKT) lines the ATP pocket.

This sequence belongs to the RecF family.

It is found in the cytoplasm. Functionally, the RecF protein is involved in DNA metabolism; it is required for DNA replication and normal SOS inducibility. RecF binds preferentially to single-stranded, linear DNA. It also seems to bind ATP. In Salmonella paratyphi B (strain ATCC BAA-1250 / SPB7), this protein is DNA replication and repair protein RecF.